A 187-amino-acid chain; its full sequence is Ribosome maturation factor RimM (187 aa).

The region spanning 96–169 (EDEFFYADLE…KLVIDPTAAG (74 aa)) is the PRC barrel domain.

It belongs to the RimM family. As to quaternary structure, binds ribosomal protein uS19.

The protein resides in the cytoplasm. An accessory protein needed during the final step in the assembly of 30S ribosomal subunit, possibly for assembly of the head region. Essential for efficient processing of 16S rRNA. May be needed both before and after RbfA during the maturation of 16S rRNA. It has affinity for free ribosomal 30S subunits but not for 70S ribosomes. The polypeptide is Ribosome maturation factor RimM (Sinorhizobium medicae (strain WSM419) (Ensifer medicae)).